We begin with the raw amino-acid sequence, 712 residues long: Transcriptional regulator GZF3 (712 aa).

Over residues 1 to 13 (MSMSDIQQRPQIP) the composition is skewed to polar residues. Disordered regions lie at residues 1–20 (MSMSDIQQRPQIPTTTTAAV), 27–135 (NVNT…GPVC), 173–280 (SLKT…HHHL), 377–533 (DVSS…GNNF), and 596–712 (LNNN…KVKI). Low complexity-rich tracts occupy residues 27 to 84 (NVNT…EQSS) and 107 to 131 (PKTGTTSSSSSTTTSSATSSKISMS). Residues 135-159 (CGNCQTQTTPLWRRDETGQVLCNAC) form a GATA-type zinc finger. Over residues 186 to 199 (KQNGSNSQSSKSSG) the composition is skewed to low complexity. Residues 213 to 223 (GKKSPKSKKKS) show a composition bias toward basic residues. Residues 246–261 (ATSNNTPTFKSTTSQS) show a composition bias toward polar residues. A compositionally biased stretch (basic residues) spans 268–280 (NHHHQHHNHHHHL). The span at 379 to 414 (SSINGSSTSLSSSSASSSIFSSVAPSTSSSSSLSNG) shows a compositional bias: low complexity. 2 stretches are compositionally biased toward polar residues: residues 429 to 447 (SKISSPSSQPFTRSTTPLQ) and 484 to 498 (QQSMANYSQTNRSPI). Composition is skewed to low complexity over residues 499 to 532 (NGNQDNNNNNNNNNNNNNNGNNNGNNNSNNNGNN) and 596 to 616 (LNNNGGMSSQTQPQPSQQPQQ). The stretch at 545 to 598 (TRISELELVNDLYRTRIMELEAMEQAARLRENSMKKRLDEVMNLQINYQNLLNN) forms a coiled coil. The span at 631 to 667 (DQGSQSISPNVSITGSTTITSPNSRSKIISETTPTHH) shows a compositional bias: polar residues.

The protein localises to the nucleus. Probable transcription factor involved in response to fluconazole, LiCl, and copper. In Candida albicans (strain SC5314 / ATCC MYA-2876) (Yeast), this protein is Transcriptional regulator GZF3 (GZF3).